A 714-amino-acid polypeptide reads, in one-letter code: Protein artemis (714 aa).

Disordered regions lie at residues 391 to 500 (ELFD…ESNA), 516 to 577 (ESSE…TVLI), 598 to 617 (ALLS…RWKL), and 638 to 683 (EKDA…LTPD). Over residues 427–440 (NESTESYRANTAYT) the composition is skewed to polar residues. Acidic residues predominate over residues 447–468 (VDCEESNDDDDDDDDDDKEDDS). Composition is skewed to polar residues over residues 484-500 (SIAS…ESNA) and 532-543 (GSQSLFSDSDGV). The segment covering 544–561 (SDSTHISSQNSSQSTHIS) has biased composition (low complexity). A compositionally biased stretch (polar residues) spans 562–577 (EQGSQGWDSQMDTVLI). 2 stretches are compositionally biased toward basic and acidic residues: residues 603-615 (DTPR…DSRW) and 660-670 (RTPDLELKRDS). Phosphoserine; by ATM is present on Ser-670.

The protein belongs to the DNA repair metallo-beta-lactamase (DRMBL) family. As to quaternary structure, interacts with PRKDC. In terms of processing, phosphorylation on undefined residues by PRKDC may stimulate endonucleolytic activity on 5' and 3' hairpins and overhangs. PRKDC must remain present, even after phosphorylation, for efficient hairpin opening.

It is found in the nucleus. In terms of biological role, required for V(D)J recombination, the process by which exons encoding the antigen-binding domains of immunoglobulins and T-cell receptor proteins are assembled from individual V, (D), and J gene segments. V(D)J recombination is initiated by the lymphoid specific RAG endonuclease complex, which generates site specific DNA double strand breaks (DSBs). These DSBs present two types of DNA end structures: hairpin sealed coding ends and phosphorylated blunt signal ends. These ends are independently repaired by the non homologous end joining (NHEJ) pathway to form coding and signal joints respectively. This protein exhibits single-strand specific 5'-3' exonuclease activity in isolation, and acquires endonucleolytic activity on 5' and 3' hairpins and overhangs when in a complex with PRKDC. The latter activity is required specifically for the resolution of closed hairpins prior to the formation of the coding joint. May also be required for the repair of complex DSBs induced by ionizing radiation, which require substantial end-processing prior to religation by NHEJ. This is Protein artemis (DCLRE1C) from Gallus gallus (Chicken).